Consider the following 301-residue polypeptide: Inosose dehydratase (301 aa).

It belongs to the IolE/MocC family. Glutathione is required as a cofactor. Co(2+) serves as cofactor. The cofactor is Mn(2+).

It catalyses the reaction scyllo-inosose = 3D-3,5/4-trihydroxycyclohexane-1,2-dione + H2O. It functions in the pathway polyol metabolism; myo-inositol degradation into acetyl-CoA; acetyl-CoA from myo-inositol: step 2/7. In terms of biological role, catalyzes the dehydration of inosose (2-keto-myo-inositol, 2KMI or 2,4,6/3,5-pentahydroxycyclohexanone) to 3D-(3,5/4)-trihydroxycyclohexane-1,2-dione (D-2,3-diketo-4-deoxy-epi-inositol). This is Inosose dehydratase from Lacticaseibacillus casei (strain BL23) (Lactobacillus casei).